The primary structure comprises 345 residues: Heat-inducible transcription repressor HrcA (345 aa).

Belongs to the HrcA family.

Functionally, negative regulator of class I heat shock genes (grpE-dnaK-dnaJ and groELS operons). Prevents heat-shock induction of these operons. This chain is Heat-inducible transcription repressor HrcA, found in Desulfitobacterium hafniense (strain DSM 10664 / DCB-2).